Reading from the N-terminus, the 242-residue chain is Probable transcriptional regulatory protein BTH_I1015 (242 aa).

Belongs to the TACO1 family.

It localises to the cytoplasm. This is Probable transcriptional regulatory protein BTH_I1015 from Burkholderia thailandensis (strain ATCC 700388 / DSM 13276 / CCUG 48851 / CIP 106301 / E264).